A 743-amino-acid chain; its full sequence is Cap-specific mRNA (nucleoside-2'-O-)-methyltransferase 2 (743 aa).

One can recognise an Adrift-type SAM-dependent 2'-O-MTase domain in the interval 113 to 326; it reads ELCTQAWAKF…LYIVCLDYQA (214 aa). Residue lysine 121 is part of the active site. Glycine 152, tryptophan 171, and aspartate 239 together coordinate S-adenosyl-L-methionine. Aspartate 239 is an active-site residue. Residue lysine 279 is the Proton acceptor of the active site.

The protein localises to the nucleus. Its subcellular location is the cytoplasm. The catalysed reaction is a 5'-end (N(7)-methyl 5'-triphosphoguanosine)-(2'-O-methyl-ribonucleoside)-(ribonucleotide) in mRNA + S-adenosyl-L-methionine = a 5'-end (N(7)-methyl 5'-triphosphoguanosine)-(2'-O-methyl-ribonucleoside)-(2'-O-methyl-ribonucleotide) in mRNA + S-adenosyl-L-homocysteine + H(+). Functionally, S-adenosyl-L-methionine-dependent methyltransferase that mediates mRNA cap2 2'-O-ribose methylation to the 5'-cap structure of mRNAs. Methylates the ribose of the second nucleotide of a m(7)GpppG-capped mRNA and small nuclear RNA (snRNA) (cap0) to produce m(7)GpppRmpNm (cap2). This is Cap-specific mRNA (nucleoside-2'-O-)-methyltransferase 2 (cmtr2) from Danio rerio (Zebrafish).